Consider the following 128-residue polypeptide: MSIRRTFFSYKRETVQYPACPRQHQYIMIVNRVSISSCVRGARSIHRKARPTIFLVGSVGWNGEAEISYSLSVTVILSNISPHKRDDGGFPAFIAAWEIVAAVNMVLARLRTDLGNSATCSPPAESIS.

This is an uncharacterized protein from Gallus gallus (Chicken).